Consider the following 928-residue polypeptide: MKKRLVTLLAGLLTVLSMGFGLAQFSDVPAGHWAKEAVEALAAKGIILGFPDGTFRGNENLTRYQAALLIYRLLQQIEEELKTQGTSPTMEALAPEDLEALKNAVQELAAELASLGVRVSALEDSAATKEDIARLEAMIAELKAQPMPEPGMDQAALKDLMDRVEAASIAADTALAQAQQLAERLDALAQDVEGVKGDLAGLRSQVEANADAIQALNELAVLLNQDVLSLQDRVTALEKMVSGGQELPDLEQFATKEDVAAVQEFAAALRSDLVGLSDKVSKLEEQVAELNKVRYSISGSLSATYGTVVTDTGTNFDIDRLFPGNAFSTGTYGSFSSSVQAGDSNQGNISGGSASLTFGVKVAQPGTSGVNVSEASATLQVPAAFGTAYTSAPTIRLNAASVKGNVDGQAFSVVYSRAVSSFKFNDYLFANDNDSEPANPRQGMVATFSATKFPLAPEVTVVAGVAGPDATKDTAPALNGNYFGIRTAVKPFSALNLALNYATNLGNRSAIGVDGGLELGPAKLSGLWVSSQTPGSPFADFFDNTLSDWAYYAQAEAKLGPLSLSANYHAVDPQYADGQAGMSENEDTTYYGGEKAGAPYGADTRGLGVSASVGFGPVTLKGYAESEGDYNLAPGSVNDAWGVAATLGSFRGFSLTGFYNAAYTGGNGYFSLTTAVDAIAPGVTYYYTIENQKYSSSWGVRVAHDGKAEDALIPTLNLTAQYATYYVSGHTDIQVYADLAKPFKLAILSLSPGFRYHSFAGAGSAPTYTTLKGGVQVSTDPLLFGLSLDGAVSYRRTQYTNNPSNVTTYELYYRAGVKLQDFLAPKLNFSVAYAHYEGDQLAGTGLPVVGSGNQAFNFARDRVYRSPDPIAAPWLATPGTQAGKLDGFYIEAKYYDLTVAYGEFVLDDLNGTNPNFGRGFKISYTVKF.

The N-terminal stretch at 1 to 23 (MKKRLVTLLAGLLTVLSMGFGLA) is a signal peptide. Residues 24–84 (QFSDVPAGHW…QQIEEELKTQ (61 aa)) form the SLH domain.

Homotrimer.

The protein resides in the cell outer membrane. Its function is as follows. Plays an important role in the structural organization and integrity of the cell envelope, bridging the outer membrane to the peptidoglyan layer. Appears to be a nonselective channel. The protein is Outer membrane protein SlpA (slpA) of Thermus thermophilus (strain ATCC 27634 / DSM 579 / HB8).